The chain runs to 338 residues: MNRFLQLCVDGKTLTAGEAETLMNMMMAAEMTPSEMGGILSILAHRGETPEELAGFVKAMRAHALTVDGLPDIVDTCGTGGDGISTFNISTASAIVASAAGAKIAKHGNRSVSSKSGSADVLEELEVSIQTTPEKVKSSIETNNMGFLFAPLYHSSMKHVAGTRKELGFRTVFNLLGPLSNPLQAKRQVIGVYSVEKAGLMASALETFQPKHVMFVSSRDGLDELSITAPTDVIELKDGERREYTVSPEDFGFTNGRLEDLQVQSPKESAYLIQNIFENKSSSSALSITAFNAGAAIYTAGITASLKEGTELALETITSGGAAAQLERLKQKEEEIYA.

5-phospho-alpha-D-ribose 1-diphosphate contacts are provided by residues G78, 81-82 (GD), T86, 88-91 (NIST), 106-114 (KHGNRSVSS), and S118. G78 is a binding site for anthranilate. S90 provides a ligand contact to Mg(2+). N109 contacts anthranilate. R164 provides a ligand contact to anthranilate. D223 and E224 together coordinate Mg(2+).

The protein belongs to the anthranilate phosphoribosyltransferase family. Homodimer. Mg(2+) serves as cofactor.

It carries out the reaction N-(5-phospho-beta-D-ribosyl)anthranilate + diphosphate = 5-phospho-alpha-D-ribose 1-diphosphate + anthranilate. It functions in the pathway amino-acid biosynthesis; L-tryptophan biosynthesis; L-tryptophan from chorismate: step 2/5. In terms of biological role, catalyzes the transfer of the phosphoribosyl group of 5-phosphorylribose-1-pyrophosphate (PRPP) to anthranilate to yield N-(5'-phosphoribosyl)-anthranilate (PRA). The sequence is that of Anthranilate phosphoribosyltransferase from Bacillus subtilis (strain 168).